A 585-amino-acid polypeptide reads, in one-letter code: Arginine--tRNA ligase (585 aa).

The short motif at 130–140 (ANPTGPMHVGH) is the 'HIGH' region element.

It belongs to the class-I aminoacyl-tRNA synthetase family. Monomer.

The protein localises to the cytoplasm. The enzyme catalyses tRNA(Arg) + L-arginine + ATP = L-arginyl-tRNA(Arg) + AMP + diphosphate. This chain is Arginine--tRNA ligase, found in Methylorubrum extorquens (strain CM4 / NCIMB 13688) (Methylobacterium extorquens).